A 179-amino-acid polypeptide reads, in one-letter code: NADH-quinone oxidoreductase subunit B (179 aa).

[4Fe-4S] cluster contacts are provided by Cys53, Cys54, Cys118, and Cys148.

It belongs to the complex I 20 kDa subunit family. NDH-1 is composed of 14 different subunits. Subunits NuoB, C, D, E, F, and G constitute the peripheral sector of the complex. Requires [4Fe-4S] cluster as cofactor.

Its subcellular location is the cell membrane. The enzyme catalyses a quinone + NADH + 5 H(+)(in) = a quinol + NAD(+) + 4 H(+)(out). In terms of biological role, NDH-1 shuttles electrons from NADH, via FMN and iron-sulfur (Fe-S) centers, to quinones in the respiratory chain. The immediate electron acceptor for the enzyme in this species is believed to be a menaquinone. Couples the redox reaction to proton translocation (for every two electrons transferred, four hydrogen ions are translocated across the cytoplasmic membrane), and thus conserves the redox energy in a proton gradient. This Bacillus thuringiensis (strain Al Hakam) protein is NADH-quinone oxidoreductase subunit B.